A 398-amino-acid chain; its full sequence is MKLEKLPEEFVQAKPVLEKIIEHGFEAYFVGGSVRDILLGREIHDVDIATSAYPEEIKDIFPYTIDVGIEHGTVLVLAGKSEAEHYEITTFRTESKYTDYRRPDHVDFVRDLREDLKRRDFTINAFACDVNGQIIDLFDGLTDLKERRLTAVGSALERFNEDALRIMRAMRFAATLDFQIENKTFLAMCESAHLLEKISVERIFIEFDKLLLGQDWRNGLTLLLKSGAYKYLPDLQDSALKKVLTDLSVDFHFQNSEQAWAALLTRFSNVDVKTFLRKWKVSNEFAKFVADLVSAYELDSWDLMSLYHFGLEKVLLVDELKVAYGLKINREQAVTINNQLQIHDKSEIVIAGKDLMEEFSLEPGPELGKILKIIEEKIVKNELKNEQAAIFAEVKKML.

Positions 32 and 35 each coordinate ATP. CTP-binding residues include Gly32 and Arg35. Asp45 and Asp47 together coordinate Mg(2+). The ATP site is built by Arg119, Asp162, Arg165, Arg168, and Arg171. Positions 119, 162, 165, 168, and 171 each coordinate CTP.

This sequence belongs to the tRNA nucleotidyltransferase/poly(A) polymerase family. Bacterial CCA-adding enzyme type 3 subfamily. Homodimer. Mg(2+) serves as cofactor.

It catalyses the reaction a tRNA precursor + 2 CTP + ATP = a tRNA with a 3' CCA end + 3 diphosphate. It carries out the reaction a tRNA with a 3' CCA end + 2 CTP + ATP = a tRNA with a 3' CCACCA end + 3 diphosphate. Functionally, catalyzes the addition and repair of the essential 3'-terminal CCA sequence in tRNAs without using a nucleic acid template. Adds these three nucleotides in the order of C, C, and A to the tRNA nucleotide-73, using CTP and ATP as substrates and producing inorganic pyrophosphate. tRNA 3'-terminal CCA addition is required both for tRNA processing and repair. Also involved in tRNA surveillance by mediating tandem CCA addition to generate a CCACCA at the 3' terminus of unstable tRNAs. While stable tRNAs receive only 3'-terminal CCA, unstable tRNAs are marked with CCACCA and rapidly degraded. The chain is CCA-adding enzyme from Lactococcus lactis subsp. lactis (strain IL1403) (Streptococcus lactis).